The primary structure comprises 725 residues: N-alpha-acetyltransferase 35, NatC auxiliary subunit (725 aa).

A Phosphoserine modification is found at serine 187. Residues 548-573 form a disordered region; it reads ERIMEEQQKGRSSKKTKKKKKVRPLS. A compositionally biased stretch (basic residues) spans 558-571; sequence RSSKKTKKKKKVRP.

Belongs to the MAK10 family. Component of the N-terminal acetyltransferase C (NatC) complex, which is composed of NAA35, NAA38 and NAA30.

The protein localises to the cytoplasm. Auxillary component of the N-terminal acetyltransferase C (NatC) complex which catalyzes acetylation of N-terminal methionine residues. N-terminal acetylation protects proteins from ubiquitination and degradation by the N-end rule pathway. Involved in regulation of apoptosis and proliferation of smooth muscle cells. This chain is N-alpha-acetyltransferase 35, NatC auxiliary subunit (NAA35), found in Macaca fascicularis (Crab-eating macaque).